A 248-amino-acid chain; its full sequence is Proteasome subunit alpha (248 aa).

Residues 229-248 (LLEADGATTEAESSAEEEDE) are disordered.

It belongs to the peptidase T1A family. The 20S proteasome core is composed of 14 alpha and 14 beta subunits that assemble into four stacked heptameric rings, resulting in a barrel-shaped structure. The two inner rings, each composed of seven catalytic beta subunits, are sandwiched by two outer rings, each composed of seven alpha subunits. The catalytic chamber with the active sites is on the inside of the barrel. Has a gated structure, the ends of the cylinder being occluded by the N-termini of the alpha-subunits. Is capped by the proteasome-associated ATPase, ARC.

Its subcellular location is the cytoplasm. The protein operates within protein degradation; proteasomal Pup-dependent pathway. Its activity is regulated as follows. The formation of the proteasomal ATPase ARC-20S proteasome complex, likely via the docking of the C-termini of ARC into the intersubunit pockets in the alpha-rings, may trigger opening of the gate for substrate entry. Interconversion between the open-gate and close-gate conformations leads to a dynamic regulation of the 20S proteasome proteolysis activity. In terms of biological role, component of the proteasome core, a large protease complex with broad specificity involved in protein degradation. The chain is Proteasome subunit alpha from Streptomyces scabiei (strain 87.22).